Here is a 394-residue protein sequence, read N- to C-terminus: Elongation factor Tu 2 (394 aa).

The tr-type G domain maps to 10–204 (KPHVNVGTIG…ALDNYIPEPE (195 aa)). Residues 19–26 (GHVDHGKT) are G1. 19–26 (GHVDHGKT) contributes to the GTP binding site. Thr-26 contributes to the Mg(2+) binding site. The segment at 60 to 64 (GITIS) is G2. The segment at 81–84 (DCPG) is G3. Residues 81–85 (DCPGH) and 136–139 (NKCD) contribute to the GTP site. A G4 region spans residues 136-139 (NKCD). Residues 174-176 (SAL) form a G5 region.

The protein belongs to the TRAFAC class translation factor GTPase superfamily. Classic translation factor GTPase family. EF-Tu/EF-1A subfamily. In terms of assembly, monomer.

The protein localises to the cytoplasm. The catalysed reaction is GTP + H2O = GDP + phosphate + H(+). Functionally, GTP hydrolase that promotes the GTP-dependent binding of aminoacyl-tRNA to the A-site of ribosomes during protein biosynthesis. This Photobacterium profundum (strain SS9) protein is Elongation factor Tu 2.